A 1066-amino-acid chain; its full sequence is DNA-directed RNA polymerase subunit beta (1066 aa).

It belongs to the RNA polymerase beta chain family. As to quaternary structure, in plastids the minimal PEP RNA polymerase catalytic core is composed of four subunits: alpha, beta, beta', and beta''. When a (nuclear-encoded) sigma factor is associated with the core the holoenzyme is formed, which can initiate transcription.

Its subcellular location is the plastid. The protein resides in the chloroplast. The enzyme catalyses RNA(n) + a ribonucleoside 5'-triphosphate = RNA(n+1) + diphosphate. Its function is as follows. DNA-dependent RNA polymerase catalyzes the transcription of DNA into RNA using the four ribonucleoside triphosphates as substrates. In Psilotum nudum (Whisk fern), this protein is DNA-directed RNA polymerase subunit beta.